We begin with the raw amino-acid sequence, 226 residues long: ATP synthase F(0) complex subunit a (226 aa).

Helical transmembrane passes span 11–31 (SPEL…VLLI), 37–54 (LLGN…MTIM), 72–92 (LTSL…PYTF), 98–118 (LSMN…TGMT), 138–158 (IPFM…ALGV), 178–198 (TLNF…LLFL), and 199–219 (LCIL…LLII).

This sequence belongs to the ATPase A chain family. As to quaternary structure, component of the ATP synthase complex composed at least of ATP5F1A/subunit alpha, ATP5F1B/subunit beta, ATP5MC1/subunit c (homooctomer), MT-ATP6/subunit a, MT-ATP8/subunit 8, ATP5ME/subunit e, ATP5MF/subunit f, ATP5MG/subunit g, ATP5MK/subunit k, ATP5MJ/subunit j, ATP5F1C/subunit gamma, ATP5F1D/subunit delta, ATP5F1E/subunit epsilon, ATP5PF/subunit F6, ATP5PB/subunit b, ATP5PD/subunit d, ATP5PO/subunit OSCP. ATP synthase complex consists of a soluble F(1) head domain (subunits alpha(3) and beta(3)) - the catalytic core - and a membrane F(0) domain - the membrane proton channel (subunits c, a, 8, e, f, g, k and j). These two domains are linked by a central stalk (subunits gamma, delta, and epsilon) rotating inside the F1 region and a stationary peripheral stalk (subunits F6, b, d, and OSCP). Interacts with DNAJC30; interaction is direct.

The protein resides in the mitochondrion inner membrane. It carries out the reaction H(+)(in) = H(+)(out). Its function is as follows. Subunit a, of the mitochondrial membrane ATP synthase complex (F(1)F(0) ATP synthase or Complex V) that produces ATP from ADP in the presence of a proton gradient across the membrane which is generated by electron transport complexes of the respiratory chain. ATP synthase complex consist of a soluble F(1) head domain - the catalytic core - and a membrane F(1) domain - the membrane proton channel. These two domains are linked by a central stalk rotating inside the F(1) region and a stationary peripheral stalk. During catalysis, ATP synthesis in the catalytic domain of F(1) is coupled via a rotary mechanism of the central stalk subunits to proton translocation. With the subunit c (ATP5MC1), forms the proton-conducting channel in the F(0) domain, that contains two crucial half-channels (inlet and outlet) that facilitate proton movement from the mitochondrial intermembrane space (IMS) into the matrix. Protons are taken up via the inlet half-channel and released through the outlet half-channel, following a Grotthuss mechanism. This is ATP synthase F(0) complex subunit a from Lycodon semicarinatus (Ryukyu odd-tooth snake).